The sequence spans 364 residues: tRNA 2-selenouridine synthase (364 aa).

The Rhodanese domain maps to 14 to 137 (LIADTPIIDV…LRQTAIQATI (124 aa)). C97 serves as the catalytic S-selanylcysteine intermediate.

The protein belongs to the SelU family. As to quaternary structure, monomer.

The catalysed reaction is 5-methylaminomethyl-2-thiouridine(34) in tRNA + selenophosphate + (2E)-geranyl diphosphate + H2O + H(+) = 5-methylaminomethyl-2-selenouridine(34) in tRNA + (2E)-thiogeraniol + phosphate + diphosphate. It carries out the reaction 5-methylaminomethyl-2-thiouridine(34) in tRNA + (2E)-geranyl diphosphate = 5-methylaminomethyl-S-(2E)-geranyl-thiouridine(34) in tRNA + diphosphate. It catalyses the reaction 5-methylaminomethyl-S-(2E)-geranyl-thiouridine(34) in tRNA + selenophosphate + H(+) = 5-methylaminomethyl-2-(Se-phospho)selenouridine(34) in tRNA + (2E)-thiogeraniol. The enzyme catalyses 5-methylaminomethyl-2-(Se-phospho)selenouridine(34) in tRNA + H2O = 5-methylaminomethyl-2-selenouridine(34) in tRNA + phosphate. Its function is as follows. Involved in the post-transcriptional modification of the uridine at the wobble position (U34) of tRNA(Lys), tRNA(Glu) and tRNA(Gln). Catalyzes the conversion of 2-thiouridine (S2U-RNA) to 2-selenouridine (Se2U-RNA). Acts in a two-step process involving geranylation of 2-thiouridine (S2U) to S-geranyl-2-thiouridine (geS2U) and subsequent selenation of the latter derivative to 2-selenouridine (Se2U) in the tRNA chain. The chain is tRNA 2-selenouridine synthase from Escherichia fergusonii (strain ATCC 35469 / DSM 13698 / CCUG 18766 / IAM 14443 / JCM 21226 / LMG 7866 / NBRC 102419 / NCTC 12128 / CDC 0568-73).